Here is a 491-residue protein sequence, read N- to C-terminus: Cytochrome P450 monooxygenase 521A1 (491 aa).

Residues 1–21 (MILLTLLYLIIFYIIIDFIKK) form a helical membrane-spanning segment. Cys-438 provides a ligand contact to heme.

It belongs to the cytochrome P450 family. It depends on heme as a cofactor.

The protein localises to the membrane. It carries out the reaction discoidol + reduced [NADPH--hemoprotein reductase] + O2 = discodiene + acetone + oxidized [NADPH--hemoprotein reductase] + 2 H2O + H(+). The protein operates within sesquiterpene biosynthesis. Functionally, cytochrome P450 monooxygenase; part of the gene cluster that mediates the biosynthesis of the trisnorsesquiterpene discodiene which has a function during later stages of multicellular development, during the transition from fingers to Mexican hats. The terpene synthase tps8 converts its substrate farnesyl diphosphate (FDP) into the bicyclic sesquiterpene alcohol discoidol. The cytochrome P450 monooxygenase cyp521A1 then catalyzes the oxidative degradation of discoidol to form the trisnorsesquiterpene discodiene. The sequence is that of Cytochrome P450 monooxygenase 521A1 (cyp521A1) from Dictyostelium discoideum (Social amoeba).